The following is a 1130-amino-acid chain: MDESSELGVLETMETLTELGDELTLGDIDEMLQFVSNQVGEFPDLFSEQLCSSFPGGGSNGGSGNNSSGRGNNGGATDPAVQRSFSQVPLSTFSPSAASPQAPALQVKVSPTPPRATPVLQPRPQPQPQPPAQLQQQTVMITPTFSTAPQTRIIQQPLIYQNAATSFQVLQPQVQSLVTSPQVQPVTIQQQVQTVQAQRVLTQTANGTLQTLAPATVQTVAAPQVQQVPVLVQPQIIKTDSLVLTTLKTDGSPVMAAVQNPALTALTAPIQTAALQVPTLVGSNGTILTTMPVMMGQEKVPIKQVPGGVKQLDPPKEGERRTTHNIIEKRYRSSINDKIIELKDLVMGTDAKMHKSGVLRKAIDYIKYLQQVNHKLRQENMVLKLANQKNKLLKGIDLGSLVDSDVDLKIDDFNQNVLLMSPPASDSGSQAGFSPYSIDSEPGSPLLDDAKVKDEPDSPPVALGMVDRSRILLCVLTFLGLSFNPLTSLLQWGGAHNTDQHPYSGSGRSVLSLESGAGGWFDWMVPTLLLWLVNGVIVLSVFVKLLVHGEPVIRPHSRPSVTFWRHRKQADLDLAKGDFAAAAANLQTCLSVLGRALPTSRLDLACSLSWNVIRYSLQKLRLVRWLLKKVFQRWRATPATAAGFEDEAKSSARDAALAYHRLHQLHITGKLPAGSACSDVHMALCAVNLAECAEEKILPSTLIEIHLTAAMGLKTRCGGKLGFLASYFLNRAQSLCGPEHSTVPDSLRWLCHPLGQKFFMERSWSIKSAAKESLYCAQRSPADPIAQVHQAFCKNLLERAVESLVKPQAKKKAGDQEEESCEFSSALEYLKLLHSFVDSVGFVTSPFSSSSVLRSALGPDVICRWWTSAVTMAISWLQGDDAAVRSRFTEVERVPKALEVTESPLVKAVFYTCRAMHASLSGKADGQQNSFCHCERASGHLWSSLNVSGTTSDPSLNHVIQLFTCDLLLSLRTALWQKQASASQLLGETYHASGTELAGFQRDLGSLRRLAHSFRPAYRKVFLHEATVRLMAGASPTRTHQLLEHSLRRRPTQNTKHGEVDTWPGQRERATAILLACRHLPLSFLSSPGQRAVLLAEAARTLEKVGDRRSCSDCQQMIVKLGGGTAIAAS.

Residues 1–50 form a transcriptional activation (acidic) region; sequence MDESSELGVLETMETLTELGDELTLGDIDEMLQFVSNQVGEFPDLFSEQL. Residues 1–470 lie on the Cytoplasmic side of the membrane; the sequence is MDESSELGVL…VALGMVDRSR (470 aa). The disordered stretch occupies residues 53–133; the sequence is SFPGGGSNGG…PQPQPQPPAQ (81 aa). The segment covering 55–64 has biased composition (gly residues); sequence PGGGSNGGSG. Positions 83–93 are enriched in polar residues; that stretch reads RSFSQVPLSTF. The span at 94–104 shows a compositional bias: low complexity; it reads SPSAASPQAPA. The segment covering 111-131 has biased composition (pro residues); it reads PTPPRATPVLQPRPQPQPQPP. The tract at residues 226 to 480 is interaction with LMNA; it reads QQVPVLVQPQ…ILLCVLTFLG (255 aa). The bHLH domain maps to 319 to 369; sequence ERRTTHNIIEKRYRSSINDKIIELKDLVMGTDAKMHKSGVLRKAIDYIKYL. The tract at residues 369–390 is leucine-zipper; it reads LQQVNHKLRQENMVLKLANQKN. A Glycyl lysine isopeptide (Lys-Gly) (interchain with G-Cter in SUMO2) cross-link involves residue K453. A helical transmembrane segment spans residues 471-491; that stretch reads ILLCVLTFLGLSFNPLTSLLQ. The Lumenal segment spans residues 492-522; it reads WGGAHNTDQHPYSGSGRSVLSLESGAGGWFD. Residues 523-543 form a helical membrane-spanning segment; it reads WMVPTLLLWLVNGVIVLSVFV. The Cytoplasmic portion of the chain corresponds to 544 to 1130; the sequence is KLLVHGEPVI…LGGGTAIAAS (587 aa). S1087 is modified (phosphoserine).

The protein belongs to the SREBP family. In terms of assembly, forms a tight complex with SCAP, the SCAP-SREBP complex, in the endoplasmic reticulum membrane and the Golgi apparatus. Interacts with PAQR3; the interaction anchors the SCAP-SREBP complex to the Golgi apparatus in low cholesterol conditions. Interacts (via C-terminal domain) with RNF139. As to quaternary structure, homodimer; efficient DNA binding of the soluble transcription factor fragment requires dimerization with another bHLH protein. Interacts with LMNA. In terms of processing, processed in the Golgi apparatus, releasing the protein from the membrane. At low cholesterol the SCAP-SREBP complex is recruited into COPII vesicles for export from the endoplasmic reticulum. In the Golgi, complex SREBPs are cleaved sequentially by site-1 (MBTPS1, S1P) and site-2 (MBTPS2, S2P) proteases. The first cleavage by site-1 protease occurs within the luminal loop, the second cleavage by site-2 protease occurs within the first transmembrane domain, releasing the transcription factor from the Golgi membrane. Apoptosis triggers cleavage by the cysteine proteases caspase-3 and caspase-7. Cleavage and activation is induced by mediated cholesterol efflux. Post-translationally, phosphorylated by AMPK, leading to suppress protein processing and nuclear translocation, and repress target gene expression. SCAP-free SREBF2 is ubiquitinated by the BCR(ARMC5) complex, leading to its degradation. In terms of processing, ubiquitinated; the nuclear form has a rapid turnover and is rapidly ubiquitinated and degraded by the proteasome in the nucleus.

It is found in the endoplasmic reticulum membrane. The protein localises to the golgi apparatus membrane. It localises to the cytoplasmic vesicle. The protein resides in the COPII-coated vesicle membrane. Its subcellular location is the nucleus. With respect to regulation, activation by cleavage is down-regulated upon activation of SIRT3-dependent PRKAA1/AMPK-alpha signaling cascade which leads to inhibition of ATP-consuming lipogenesis to restore cellular energy balance. Functionally, precursor of the transcription factor form (Processed sterol regulatory element-binding protein 2), which is embedded in the endoplasmic reticulum membrane. Low sterol concentrations promote processing of this form, releasing the transcription factor form that translocates into the nucleus and activates transcription of genes involved in cholesterol biosynthesis. Its function is as follows. Key transcription factor that regulates expression of genes involved in cholesterol biosynthesis. Binds to the sterol regulatory element 1 (SRE-1) (5'-ATCACCCCAC-3'). Has dual sequence specificity binding to both an E-box motif (5'-ATCACGTGA-3') and to SRE-1 (5'-ATCACCCCAC-3'). Regulates transcription of genes related to cholesterol synthesis pathway. In Mus musculus (Mouse), this protein is Sterol regulatory element-binding protein 2.